Consider the following 1177-residue polypeptide: Zinc finger CCCH domain-containing protein 6 (1177 aa).

The segment covering M1–E12 has biased composition (basic and acidic residues). 2 disordered regions span residues M1 to Y137 and Q179 to R206. The span at D13–D31 shows a compositional bias: acidic residues. The stretch at E27–N73 forms a coiled coil. The span at Q32 to Y46 shows a compositional bias: basic and acidic residues. Residues R47–N73 show a composition bias toward basic residues. Over residues Q179–K188 the composition is skewed to low complexity. C3H1-type zinc fingers lie at residues K271 to E297, E299 to F326, and P327 to L350. Residues H347–G383 adopt a coiled-coil conformation. Disordered stretches follow at residues G383 to D416, P446 to Q587, Q622 to G654, R670 to H767, P780 to E826, E942 to S988, D1043 to G1101, and L1132 to L1162. Residues H493–C502 show a composition bias toward low complexity. 2 stretches are compositionally biased toward polar residues: residues E512–E522 and S564–Q587. A compositionally biased stretch (polar residues) spans R713–P728. Positions P753–H767 are enriched in basic and acidic residues. Over residues G955–L967 the composition is skewed to basic and acidic residues. 2 stretches are compositionally biased toward polar residues: residues L1050–T1064 and K1077–A1093. A Phosphoserine modification is found at S1150.

The polypeptide is Zinc finger CCCH domain-containing protein 6 (Zc3h6) (Mus musculus (Mouse)).